The following is a 260-amino-acid chain: Hydroxyethylthiazole kinase 1 (260 aa).

Position 39 (M39) interacts with substrate. R115 and T160 together coordinate ATP. Residue G187 participates in substrate binding.

Belongs to the Thz kinase family. It depends on Mg(2+) as a cofactor.

The enzyme catalyses 5-(2-hydroxyethyl)-4-methylthiazole + ATP = 4-methyl-5-(2-phosphooxyethyl)-thiazole + ADP + H(+). It participates in cofactor biosynthesis; thiamine diphosphate biosynthesis; 4-methyl-5-(2-phosphoethyl)-thiazole from 5-(2-hydroxyethyl)-4-methylthiazole: step 1/1. Catalyzes the phosphorylation of the hydroxyl group of 4-methyl-5-beta-hydroxyethylthiazole (THZ). This is Hydroxyethylthiazole kinase 1 from Streptococcus pneumoniae (strain ATCC 700669 / Spain 23F-1).